We begin with the raw amino-acid sequence, 806 residues long: MFVSYRWLQEYVDIKDVTAQELADKITKSGIEVEGVEVLNKGVKGVVVGHVLECEKHPEADKLSKCLIDIGEEEPVQIICGAANIAKGLKVPVAKVGAVLPGNFKIKKAKLRGEASHGMVCALQELGIDGKLVSKEYADGIFIFPSDAEVGADALEILNLHDEVLELGLTPNRADCLNMLGVAYEVAAIYGREVKLPAIDLQETAEKTSDYISVSVEAKEENPLYIAKMVKNVKIGPSPMWMQTRLMAAGIRPISNVVDITNYILMEYGQPLHAFDYDKLGSKEIVVRLAKEGEKIETLDDQERTLQSHHLVITNGTKALAVAGVMGGADSEVTNETVNVLIESAYFAGQTVRRTSKDLGLRSESSARFEKGIDPTRTFEAIQHAAALMAKYAGGEALEGVVEADNLQVQERTVSVTAEKVNRVLGTNISASEMGTMFTNLKFPFTEVEGTFHVNVPARRPDITISEDLVEEVGRLYGYDHIPVTLPSGTMTRGKLTSAQTKRRKVRRFLEGAGLYEAITYSLTSADKAKQYMVEPNEKAPVGLALPMSEERSQLRLSLVPQLLEAVSYNVARKNDSVALYEVGSIFLPTEEGELPKEEQHLAGVMTGLALHHAWQGEKKVVDFFVVKGVLEGLFDVLGVANQITYAPAKREGMHPGRTADIVLDGEVIGFIGQLHPEAEKQLDVKNTFVFELSLVKVFGADAEETYYAAIPRFPSMTRDMAVVVTKETKAGEMKQVIAEAGGELLKDVTLFDLYEGEKMEEGKKSLAFSMTYFDAERTLTDEEVTEAHNRVLTTVEEKFGAELRK.

One can recognise a tRNA-binding domain in the interval 40–155 (NKGVKGVVVG…SDAEVGADAL (116 aa)). The region spanning 409–484 (VQERTVSVTA…RLYGYDHIPV (76 aa)) is the B5 domain. D462, D468, E471, and E472 together coordinate Mg(2+). In terms of domain architecture, FDX-ACB spans 712-805 (PRFPSMTRDM…VEEKFGAELR (94 aa)).

The protein belongs to the phenylalanyl-tRNA synthetase beta subunit family. Type 1 subfamily. As to quaternary structure, tetramer of two alpha and two beta subunits. Mg(2+) serves as cofactor.

Its subcellular location is the cytoplasm. It catalyses the reaction tRNA(Phe) + L-phenylalanine + ATP = L-phenylalanyl-tRNA(Phe) + AMP + diphosphate + H(+). The protein is Phenylalanine--tRNA ligase beta subunit of Bacillus cereus (strain ATCC 14579 / DSM 31 / CCUG 7414 / JCM 2152 / NBRC 15305 / NCIMB 9373 / NCTC 2599 / NRRL B-3711).